Reading from the N-terminus, the 213-residue chain is N-(5'-phosphoribosyl)anthranilate isomerase (213 aa).

The protein belongs to the TrpF family.

It carries out the reaction N-(5-phospho-beta-D-ribosyl)anthranilate = 1-(2-carboxyphenylamino)-1-deoxy-D-ribulose 5-phosphate. It participates in amino-acid biosynthesis; L-tryptophan biosynthesis; L-tryptophan from chorismate: step 3/5. The protein is N-(5'-phosphoribosyl)anthranilate isomerase of Rhodopseudomonas palustris (strain TIE-1).